The sequence spans 200 residues: N-(5'-phosphoribosyl)anthranilate isomerase (200 aa).

The protein belongs to the TrpF family.

It catalyses the reaction N-(5-phospho-beta-D-ribosyl)anthranilate = 1-(2-carboxyphenylamino)-1-deoxy-D-ribulose 5-phosphate. It functions in the pathway amino-acid biosynthesis; L-tryptophan biosynthesis; L-tryptophan from chorismate: step 3/5. The chain is N-(5'-phosphoribosyl)anthranilate isomerase from Endomicrobium trichonymphae.